Consider the following 311-residue polypeptide: 2-dehydro-3-deoxygluconokinase (311 aa).

Substrate-binding positions include 34–35 (GS), 106–108 (YYR), and R166. ATP-binding positions include 164–166 (NIR), 224–229 (KLGPKG), 253–256 (GAGD), and S283. Substrate is bound by residues G253 and D256. D256 (proton acceptor) is an active-site residue. Substrate is bound at residue D292.

It belongs to the carbohydrate kinase PfkB family. As to quaternary structure, homotetramer. A divalent metal cation is required as a cofactor.

It catalyses the reaction 2-dehydro-3-deoxy-D-gluconate + ATP = 2-dehydro-3-deoxy-6-phospho-D-gluconate + ADP + H(+). The protein operates within carbohydrate acid metabolism; 2-dehydro-3-deoxy-D-gluconate degradation; D-glyceraldehyde 3-phosphate and pyruvate from 2-dehydro-3-deoxy-D-gluconate: step 1/2. Its function is as follows. Involved in the degradation of glucose via the semi-phosphorylative Entner-Doudoroff pathway. Catalyzes the phosphorylation of 2-keto-3-deoxygluconate (KDG) to produce 2-keto-3-deoxy-6-phosphogluconate (KDPG). Can also use GTP, but not ADP or AMP, as a phosphoryl donor and 2-keto-D-gluconate (KG) as a phosphoryl acceptor. In Sulfurisphaera tokodaii (strain DSM 16993 / JCM 10545 / NBRC 100140 / 7) (Sulfolobus tokodaii), this protein is 2-dehydro-3-deoxygluconokinase.